Consider the following 449-residue polypeptide: Asparagine--tRNA ligase (449 aa).

Belongs to the class-II aminoacyl-tRNA synthetase family. In terms of assembly, homodimer.

The protein localises to the cytoplasm. The catalysed reaction is tRNA(Asn) + L-asparagine + ATP = L-asparaginyl-tRNA(Asn) + AMP + diphosphate + H(+). The chain is Asparagine--tRNA ligase from Deinococcus geothermalis (strain DSM 11300 / CIP 105573 / AG-3a).